A 913-amino-acid chain; its full sequence is Translation initiation factor IF-2 (913 aa).

The disordered stretch occupies residues 1-322 (MTDNNDDKTL…QEKFRRSQMQ (322 aa)). Residues 60-113 (VQPVVAAPKPAAPAPVAARPQAPQPRIHQPGGQQQRPGSSQSQQRSGSSAPQQR) are compositionally biased toward low complexity. Residues 131–180 (MEARRRALMEAQARDVVEAKQRAEDEARRKVEEEQRIAAEKMEAANRAAE) are compositionally biased toward basic and acidic residues. Low complexity-rich tracts occupy residues 181 to 195 (EAAA…PAAE), 203 to 238 (ERPA…AAAP), and 261 to 277 (PARG…PAAR). A tr-type G domain is found at 411-578 (SRPPVVTIMG…AILLQAEILD (168 aa)). A G1 region spans residues 420–427 (GHVDHGKT). 420–427 (GHVDHGKT) serves as a coordination point for GTP. Residues 445–449 (GITQH) are G2. The interval 466–469 (DTPG) is G3. GTP-binding positions include 466–470 (DTPGH) and 520–523 (NKID). Residues 520-523 (NKID) form a G4 region. The segment at 556–558 (SAK) is G5.

Belongs to the TRAFAC class translation factor GTPase superfamily. Classic translation factor GTPase family. IF-2 subfamily.

The protein resides in the cytoplasm. Functionally, one of the essential components for the initiation of protein synthesis. Protects formylmethionyl-tRNA from spontaneous hydrolysis and promotes its binding to the 30S ribosomal subunits. Also involved in the hydrolysis of GTP during the formation of the 70S ribosomal complex. This is Translation initiation factor IF-2 from Agrobacterium fabrum (strain C58 / ATCC 33970) (Agrobacterium tumefaciens (strain C58)).